The following is a 150-amino-acid chain: Large ribosomal subunit protein uL22c (150 aa).

This sequence belongs to the universal ribosomal protein uL22 family. As to quaternary structure, part of the 50S ribosomal subunit.

The protein localises to the plastid. The protein resides in the chloroplast. Its function is as follows. This protein binds specifically to 23S rRNA. The globular domain of the protein is located near the polypeptide exit tunnel on the outside of the subunit, while an extended beta-hairpin is found that lines the wall of the exit tunnel in the center of the 70S ribosome. The sequence is that of Large ribosomal subunit protein uL22c (rpl22) from Fagopyrum esculentum subsp. ancestrale (Wild buckwheat).